The chain runs to 276 residues: Phosphonates import ATP-binding protein PhnC (276 aa).

The ABC transporter domain occupies 2–246 (LEIHNLQKSY…VLTRIYGAED (245 aa)). 35-42 (GPSGAGKS) is an ATP binding site.

The protein belongs to the ABC transporter superfamily. Phosphonates importer (TC 3.A.1.9.1) family. As to quaternary structure, the complex is composed of two ATP-binding proteins (PhnC), two transmembrane proteins (PhnE) and a solute-binding protein (PhnD).

The protein localises to the cell inner membrane. It catalyses the reaction phosphonate(out) + ATP + H2O = phosphonate(in) + ADP + phosphate + H(+). In terms of biological role, part of the ABC transporter complex PhnCDE involved in phosphonates import. Responsible for energy coupling to the transport system. This chain is Phosphonates import ATP-binding protein PhnC, found in Alcaligenes faecalis.